The following is a 580-amino-acid chain: Trafficking protein particle complex subunit 14 (580 aa).

Disordered regions lie at residues 95-134 and 480-533; these read GSAG…TSGG and VSHP…RSGS. Residues 105-116 show a composition bias toward gly residues; the sequence is PGGGDPGGGGLF. S491 is subject to Phosphoserine. Positions 492–502 are enriched in low complexity; the sequence is RKSSPSSPAVR. Over residues 512–525 the composition is skewed to polar residues; the sequence is LGRSQSFSHQQPSR. Residue S517 is modified to Phosphoserine. At T541 the chain carries Phosphothreonine. Position 546 is a phosphoserine (S546).

Component of the multisubunit TRAPP II complex, which includes at least TRAPPC1, TRAPPC2, TRAPPC2L, TRAPPC3, TRAPPC4, TRAPPC5, TRAPPC6A/B, TRAPPC9, TRAPPC10 and TRAPPC14. TRAPPC9, TRAPPC10 and TRAPPC14 are specific subunits of the TRAPP II complex. Interacts with alpha-tubulin during mitosis. Interacts with RAB3IP (via the N-terminal region); this interaction mediates RAB3IP association with the TRAPP II complex. Interacts with TRAPPC10. Interacts with FBF1.

It localises to the cytoplasm. The protein resides in the cytoskeleton. It is found in the spindle. Its subcellular location is the vesicle. The protein localises to the midbody. Functionally, specific subunit of the TRAPP (transport protein particle) II complex, a highly conserved vesicle tethering complex that functions in late Golgi trafficking as a membrane tether. TRAPPC14 is dispensable for TRAPPII complex integrity but mediates RAB3IP preciliary vesicle trafficking to the mother centriole during ciliogenesis. Modulates YAP1 activity as transcriptional regulator. The chain is Trafficking protein particle complex subunit 14 from Mus musculus (Mouse).